The sequence spans 421 residues: UDP-N-acetylglucosamine 1-carboxyvinyltransferase (421 aa).

Phosphoenolpyruvate is bound at residue 22 to 23 (KN). A UDP-N-acetyl-alpha-D-glucosamine-binding site is contributed by Arg-93. Cys-117 serves as the catalytic Proton donor. Position 117 is a 2-(S-cysteinyl)pyruvic acid O-phosphothioketal (Cys-117). UDP-N-acetyl-alpha-D-glucosamine-binding positions include 122–126 (RPVDL), Asp-308, and Leu-330.

It belongs to the EPSP synthase family. MurA subfamily.

The protein resides in the cytoplasm. The enzyme catalyses phosphoenolpyruvate + UDP-N-acetyl-alpha-D-glucosamine = UDP-N-acetyl-3-O-(1-carboxyvinyl)-alpha-D-glucosamine + phosphate. It participates in cell wall biogenesis; peptidoglycan biosynthesis. Functionally, cell wall formation. Adds enolpyruvyl to UDP-N-acetylglucosamine. In Wolinella succinogenes (strain ATCC 29543 / DSM 1740 / CCUG 13145 / JCM 31913 / LMG 7466 / NCTC 11488 / FDC 602W) (Vibrio succinogenes), this protein is UDP-N-acetylglucosamine 1-carboxyvinyltransferase.